The primary structure comprises 69 residues: Intrepicalcin (69 aa).

The N-terminal stretch at 1–27 (MRQNTMTIIFIVFIVTFASLTIYGAEA) is a signal peptide. Positions 28 to 36 (SEANFLERR) are excised as a propeptide. 3 disulfide bridges follow: C39–C53, C46–C57, and C52–C68. The segment at 59–60 (RR) is essential for stimulation of [3H]ryanodine binding to RYR1.

The protein belongs to the scorpion calcin family. In terms of tissue distribution, expressed by the venom gland.

The protein localises to the secreted. This toxin stabilizes ryanodine receptor 1 (RyR1) opening in a long-lasting subconductance state (55% of the full conductance state). Furthermore, it triggers calcium release from sarcoplasmic vesicles (45.3 nM are enough to induce a sharp release, and 50% of the total calcium is released after toxin (100 nM) addition) probably by acting as a cell-penetrating peptide (CPP). In addition, it has been shown to dose-dependently stimulate ryanodine binding to RyR1 (EC(50)=17.4 nM). It also augments the bell-shaped calcium-[3H]ryanodine binding curve that is maximal at about 10 uM calcium concentration. It binds a different site as ryanodine. It acts synergistically with caffeine. In vivo, intracerebroventricular injection into mice induces neurotoxic symptoms, followed by death. This Thorellius intrepidus (Scorpion) protein is Intrepicalcin.